Here is a 540-residue protein sequence, read N- to C-terminus: Chaperonin GroEL 2/3 (540 aa).

ATP contacts are provided by residues 30-33 (TLGP), K51, 87-91 (DGTTT), G415, 479-481 (NAA), and D495.

This sequence belongs to the chaperonin (HSP60) family. As to quaternary structure, forms a cylinder of 14 subunits composed of two heptameric rings stacked back-to-back. Interacts with the co-chaperonin GroES.

It is found in the cytoplasm. The enzyme catalyses ATP + H2O + a folded polypeptide = ADP + phosphate + an unfolded polypeptide.. Functionally, together with its co-chaperonin GroES, plays an essential role in assisting protein folding. The GroEL-GroES system forms a nano-cage that allows encapsulation of the non-native substrate proteins and provides a physical environment optimized to promote and accelerate protein folding. The protein is Chaperonin GroEL 2/3 of Paraburkholderia xenovorans (strain LB400).